The chain runs to 356 residues: Vesicular integral-membrane protein VIP36 (356 aa).

An N-terminal signal peptide occupies residues 1–44; it reads MAAEGWIWRWGWGRRCLGRPGLPGPGPGPATPLFLLLLLGPVVA. Residues 45-322 lie on the Lumenal side of the membrane; it reads DITDGNSEHL…FRSGPLTGWR (278 aa). Residues 52–276 form the L-type lectin-like domain; that stretch reads EHLKREHSLI…DIISMKLFQL (225 aa). Positions 96 and 131 each coordinate a carbohydrate. Asp162, Tyr164, and Asn166 together coordinate Ca(2+). A carbohydrate is bound at residue 164–166; the sequence is YPN. Asn183 carries N-linked (GlcNAc...) asparagine glycosylation. His190 is a binding site for a carbohydrate. Asp193 contacts Ca(2+). Cys202 and Cys239 are joined by a disulfide. Position 260-262 (260-262) interacts with a carbohydrate; that stretch reads GDL. Residues 323–345 form a helical membrane-spanning segment; the sequence is VFLLLLCALLGIIVCAVVGAVVF. The Cytoplasmic portion of the chain corresponds to 346 to 356; sequence QKRQERNKRFY.

Monomer. It depends on Ca(2+) as a cofactor. Expressed in kidney, liver, intestine, lung, spleen and heart. Low expression in brain.

It localises to the golgi apparatus membrane. Functionally, plays a role as an intracellular lectin in the early secretory pathway. Interacts with N-acetyl-D-galactosamine and high-mannose type glycans and may also bind to O-linked glycans. Involved in the transport and sorting of glycoproteins carrying high mannose-type glycans. The protein is Vesicular integral-membrane protein VIP36 (LMAN2) of Canis lupus familiaris (Dog).